The primary structure comprises 344 residues: Putative F-box/kelch-repeat protein At1g19930 (344 aa).

Residues Thr8 to Arg54 form the F-box domain. Kelch repeat units lie at residues Asn122 to Gly168, Ile170 to Lys195, Leu196 to Tyr241, and Asn243 to Leu276.

In Arabidopsis thaliana (Mouse-ear cress), this protein is Putative F-box/kelch-repeat protein At1g19930.